The following is a 576-amino-acid chain: Lysine--tRNA ligase (576 aa).

Mg(2+) contacts are provided by glutamate 412 and glutamate 419.

The protein belongs to the class-II aminoacyl-tRNA synthetase family. As to quaternary structure, homodimer. The cofactor is Mg(2+).

The protein resides in the cytoplasm. The enzyme catalyses tRNA(Lys) + L-lysine + ATP = L-lysyl-tRNA(Lys) + AMP + diphosphate. The sequence is that of Lysine--tRNA ligase from Phocaeicola vulgatus (strain ATCC 8482 / DSM 1447 / JCM 5826 / CCUG 4940 / NBRC 14291 / NCTC 11154) (Bacteroides vulgatus).